Here is an 858-residue protein sequence, read N- to C-terminus: Elongation factor 2b (858 aa).

Residues 17-362 (SNIRNMSVIA…MITIHLPSPV (346 aa)) enclose the tr-type G domain. GTP is bound by residues 26-33 (AHVDHGKS), 158-161 (NKMD), and 216-218 (SGL). His715 is subject to Diphthamide.

The protein belongs to the TRAFAC class translation factor GTPase superfamily. Classic translation factor GTPase family. EF-G/EF-2 subfamily. As to quaternary structure, binds to 80S ribosomes. Actively translating ribosomes show mutually exclusive binding of eIF5a (EIF5A or EIF5A2) and EEF2/eEF2. Interacts with serbp1; interaction sequesters eef2/eEF2 at the A-site of the ribosome, thereby blocking the interaction sites of the mRNA-tRNA complex, promoting ribosome stabilization and hibernation. Interacts with habp4; interaction takes place at the A-site of hibernating ribosomes and promotes ribosome stabilization.

The protein localises to the cytoplasm. Its subcellular location is the nucleus. The catalysed reaction is GTP + H2O = GDP + phosphate + H(+). Its function is as follows. Catalyzes the GTP-dependent ribosomal translocation step during translation elongation. During this step, the ribosome changes from the pre-translocational (PRE) to the post-translocational (POST) state as the newly formed A-site-bound peptidyl-tRNA and P-site-bound deacylated tRNA move to the P and E sites, respectively. Catalyzes the coordinated movement of the two tRNA molecules, the mRNA and conformational changes in the ribosome. The chain is Elongation factor 2b from Danio rerio (Zebrafish).